The following is a 183-amino-acid chain: Acyl-homoserine-lactone synthase (183 aa).

The protein belongs to the autoinducer synthase family.

The catalysed reaction is a fatty acyl-[ACP] + S-adenosyl-L-methionine = an N-acyl-L-homoserine lactone + S-methyl-5'-thioadenosine + holo-[ACP] + H(+). In terms of biological role, involved in the synthesis of the acyl-homoserine lactone (AHL) signal N-(3-hydroxydodecanoyl)-L-HSL (3-hydroxy-C(12)-HSL or OH-dDHL). Probably part of a quorum-sensing system with AnoR. The polypeptide is Acyl-homoserine-lactone synthase (Acinetobacter nosocomialis).